Here is a 201-residue protein sequence, read N- to C-terminus: Recombination protein RecR (201 aa).

A C4-type zinc finger spans residues 59–74 (CEICGNMDTENMCRIC). The 96-residue stretch at 82 to 177 (SIIAIVETVA…KISRLASGIP (96 aa)) folds into the Toprim domain.

It belongs to the RecR family.

In terms of biological role, may play a role in DNA repair. It seems to be involved in an RecBC-independent recombinational process of DNA repair. It may act with RecF and RecO. This Rickettsia africae (strain ESF-5) protein is Recombination protein RecR.